We begin with the raw amino-acid sequence, 635 residues long: Sodium- and chloride-dependent creatine transporter 1 (635 aa).

A disordered region spans residues M1–D28. At M1–D60 the chain is on the cytoplasmic side. T42 bears the Phosphothreonine mark. The helical transmembrane segment at F61–L81 threads the bilayer. The Extracellular segment spans residues C82–G87. A helical transmembrane segment spans residues G88–L108. At E109–M138 the chain is on the cytoplasmic side. Residues V139–L159 traverse the membrane as a helical segment. Over V160–A230 the chain is Extracellular. N-linked (GlcNAc...) asparagine glycosylation is found at N192 and N197. Residues L231–W251 form a helical membrane-spanning segment. Residues K252–Y269 are Cytoplasmic-facing. A helical membrane pass occupies residues V270–I290. The Extracellular portion of the chain corresponds to Y291–Q304. A helical transmembrane segment spans residues V305–T325. At A326–A341 the chain is on the cytoplasmic side. Residues I342–I362 form a helical membrane-spanning segment. Topologically, residues L363–T394 are extracellular. Residues L395 to L415 form a helical membrane-spanning segment. The Cytoplasmic segment spans residues D416 to E444. A helical transmembrane segment spans residues I445 to G465. Topologically, residues G466–S479 are extracellular. The helical transmembrane segment at G480–A500 threads the bilayer. Topologically, residues D501–K520 are cytoplasmic. Residues W521–Y541 traverse the membrane as a helical segment. Over Y542–M560 the chain is Extracellular. An N-linked (GlcNAc...) asparagine glycan is attached at N548. Residues G561 to L581 traverse the membrane as a helical segment. At R582–M635 the chain is on the cytoplasmic side. Residues T617 and T620 each carry the phosphothreonine modification. Phosphoserine is present on S623.

Belongs to the sodium:neurotransmitter symporter (SNF) (TC 2.A.22) family. SLC6A8 subfamily. Glycosylated. Predominantly expressed in skeletal muscle and kidney. Also found in brain, heart, colon, testis and prostate.

It is found in the cell membrane. The protein resides in the apical cell membrane. It catalyses the reaction creatine(out) + chloride(out) + 2 Na(+)(out) = creatine(in) + chloride(in) + 2 Na(+)(in). Creatine:sodium symporter which mediates the uptake of creatine. Plays an important role in supplying creatine to the brain via the blood-brain barrier. The protein is Sodium- and chloride-dependent creatine transporter 1 (SLC6A8) of Homo sapiens (Human).